The following is a 955-amino-acid chain: Kinesin heavy chain isoform 5C (955 aa).

The region spanning 8–327 (SIKVMCRFRP…LMFGQRAKTI (320 aa)) is the Kinesin motor domain. Positions 87, 89, 90, 91, 92, 93, 94, and 99 each coordinate ATP. The tract at residues 174-315 (VSSPEEVMDV…PSVFNEAETK (142 aa)) is microtubule-binding. The stretch at 332-366 (SVNLELTAEEWKKKYEKEKEKNKALKSVIQHLEVE) forms a coiled coil. T403 bears the Phosphothreonine mark. 2 coiled-coil regions span residues 413–538 (KEKY…LQEL) and 590–913 (ISKM…KNMA). The tract at residues 859–955 (CELPKLEKRL…GSSNSTHYQK (97 aa)) is globular. The disordered stretch occupies residues 909-955 (AKNMARRAHSAQIAKPIRPGHYPASSPTAVHAVRGGGGSSNSTHYQK).

The protein belongs to the TRAFAC class myosin-kinesin ATPase superfamily. Kinesin family. Kinesin subfamily. Oligomer composed of two heavy chains and two light chains. Interacts with GRIP1. Interacts with TRAK1. Interacts with ZFYVE27. Interacts with KLC3.

It is found in the cytoplasm. It localises to the cytoskeleton. Its subcellular location is the cell projection. The protein localises to the dendrite. It catalyses the reaction ATP + H2O = ADP + phosphate + H(+). Microtubule-associated force-producing protein that may play a role in organelle transport. Has ATPase activity. Involved in synaptic transmission. Mediates dendritic trafficking of mRNAs. Required for anterograde axonal transportation of MAPK8IP3/JIP3 which is essential for MAPK8IP3/JIP3 function in axon elongation. The chain is Kinesin heavy chain isoform 5C (Kif5c) from Rattus norvegicus (Rat).